The sequence spans 344 residues: Melanocyte-stimulating hormone receptor (344 aa).

Over 1 to 37 (MPMQGAQRKLLGSLNSTPTATSNLGLAANHTGAPCLE) the chain is Extracellular. N-linked (GlcNAc...) asparagine glycosylation is present at N29. Residues 38 to 63 (VSIPDGLFLSLGLVSLVENVLVVAAI) traverse the membrane as a helical segment. Residues 64-72 (AKNRNLHSS) are Cytoplasmic-facing. A helical membrane pass occupies residues 73–93 (MYCFICCLALSDLLVSGSNML). The Extracellular portion of the chain corresponds to 94–118 (ETAIILLLEAGTLATRASVVQQLHN). A helical transmembrane segment spans residues 119 to 140 (TIDVLTCSSMLCSLCFLGAIAV). The Cytoplasmic portion of the chain corresponds to 141–163 (DRYISIFYALRYHSIMTLPRAQR). Residues 164-183 (AIAAIWVTSVLSSTLFITYY) form a helical membrane-spanning segment. Residues 184-191 (DHAAVLLC) are Extracellular-facing. A helical transmembrane segment spans residues 192–211 (LVVFFLAMLVLMAVLYVHML). Over 212-240 (ARACQHAQGIIRLHNRQLPAHKGFGLRGA) the chain is Cytoplasmic. A helical transmembrane segment spans residues 241–266 (ATLTILLGIFFLCWGPFFLHLTLVVF). Over 267–279 (CPQHLTCNCIFKN) the chain is Extracellular. A helical transmembrane segment spans residues 280–300 (FKVFLTLIICNTIIDPLIYAF). The Cytoplasmic portion of the chain corresponds to 301–344 (RSQELRRTLKEVLLCSWWPGCGAEGGGDSVWPGSCVTLRGPLPP). C315 carries the S-palmitoyl cysteine lipid modification.

This sequence belongs to the G-protein coupled receptor 1 family. Interacts with MGRN1, but does not undergo MGRN1-mediated ubiquitination; this interaction competes with GNAS-binding and thus inhibits agonist-induced cAMP production. Interacts with OPN3; the interaction results in a decrease in MC1R-mediated cAMP signaling and ultimately a decrease in melanin production in melanocytes.

The protein localises to the cell membrane. Receptor for MSH (alpha, beta and gamma) and ACTH. The activity of this receptor is mediated by G proteins which activate adenylate cyclase. Mediates melanogenesis, the production of eumelanin (black/brown) and phaeomelanin (red/yellow), via regulation of cAMP signaling in melanocytes. This Mico argentatus (Silvery marmoset) protein is Melanocyte-stimulating hormone receptor (MC1R).